The primary structure comprises 79 residues: Small ribosomal subunit protein bS16 (79 aa).

This sequence belongs to the bacterial ribosomal protein bS16 family.

The sequence is that of Small ribosomal subunit protein bS16 from Oleidesulfovibrio alaskensis (strain ATCC BAA-1058 / DSM 17464 / G20) (Desulfovibrio alaskensis).